The primary structure comprises 198 residues: Putative Do-like 15 protein (198 aa).

Residues K48 to K198 are serine protease. Catalysis depends on charge relay system residues H86 and S175.

This sequence belongs to the peptidase S1B family.

This Arabidopsis thaliana (Mouse-ear cress) protein is Putative Do-like 15 protein (DEGP15).